The chain runs to 283 residues: MLIIETLPLLRQQIRRLRMEGKRVALVPTMGNLHDGHMKLVDEAKARADVVVVSIFVNPMQFDRPEDLARYPRTLQEDCEKLNKRKVDLVFAPSVKEIYPNGTETHTYVDVPGLSTMLEGASRPGHFRGVSTIVSKLFNLVQPDIACFGEKDFQQLALIRKMVADMGFDIEIVGVPIMRAKDGLALSSRNGYLTAEQRKIAPGLYKVLSSIADKLQAGERDLDEIIAIAGQELNEKGFRADDIQIRDADTLLEVSETSKRAVILVAAWLGDARLIDNKIVELA.

Residue 30 to 37 (MGNLHDGH) coordinates ATP. H37 acts as the Proton donor in catalysis. Q61 is a (R)-pantoate binding site. Beta-alanine is bound at residue Q61. Residue 149–152 (GEKD) participates in ATP binding. (R)-pantoate is bound at residue Q155. An ATP-binding site is contributed by 186-189 (LSSR).

The protein belongs to the pantothenate synthetase family. As to quaternary structure, homodimer.

The protein resides in the cytoplasm. It carries out the reaction (R)-pantoate + beta-alanine + ATP = (R)-pantothenate + AMP + diphosphate + H(+). The protein operates within cofactor biosynthesis; (R)-pantothenate biosynthesis; (R)-pantothenate from (R)-pantoate and beta-alanine: step 1/1. Functionally, catalyzes the condensation of pantoate with beta-alanine in an ATP-dependent reaction via a pantoyl-adenylate intermediate. The protein is Pantothenate synthetase of Shigella sonnei (strain Ss046).